Consider the following 1343-residue polypeptide: DNA-directed RNA polymerase subunit beta (1343 aa).

The protein belongs to the RNA polymerase beta chain family. As to quaternary structure, the RNAP catalytic core consists of 2 alpha, 1 beta, 1 beta' and 1 omega subunit. When a sigma factor is associated with the core the holoenzyme is formed, which can initiate transcription.

The catalysed reaction is RNA(n) + a ribonucleoside 5'-triphosphate = RNA(n+1) + diphosphate. DNA-dependent RNA polymerase catalyzes the transcription of DNA into RNA using the four ribonucleoside triphosphates as substrates. This Shewanella sp. (strain W3-18-1) protein is DNA-directed RNA polymerase subunit beta.